The sequence spans 534 residues: Protein tweety homolog 2 (534 aa).

Residues 1–44 lie on the Extracellular side of the membrane; sequence MAAARVEYIAPWWVYWLHNFPHVDLSLRQKSPDFNPKDPGYQQT. A helical membrane pass occupies residues 45 to 65; it reads LLFVALIVALCAAVNLLFVSV. Over 66–87 the chain is Cytoplasmic; it reads YLICLCCCKKEDETETKKTSSC. The chain crosses the membrane as a helical span at residues 88 to 108; that stretch reads CVTWTAAVSGLLCCAAVGIGF. Residues 109-213 are Extracellular-facing; it reads YGNSETNDGV…QTSTIEYYRW (105 aa). The Ca(2+) site is built by Glu-113 and Asp-116. Asn-129 is a glycosylation site (N-linked (GlcNAc...) asparagine). The RGD signature appears at 164–166; that stretch reads RGD. Asn-197 carries N-linked (GlcNAc...) asparagine glycosylation. The helical transmembrane segment at 214-234 threads the bilayer; it reads LSYLLLFISYVVICLVTCVGL. Topologically, residues 235 to 240 are cytoplasmic; it reads AKKSKC. A helical membrane pass occupies residues 241–261; that stretch reads LLLIMLCFGLIALMLSWTSLA. The Extracellular segment spans residues 262–388; that stretch reads LETSSAMGTS…IGICYDGVEG (127 aa). 2 cysteine pairs are disulfide-bonded: Cys-274–Cys-382 and Cys-300–Cys-367. Asn-283 and Asn-352 each carry an N-linked (GlcNAc...) asparagine glycan. The chain crosses the membrane as a helical span at residues 389–409; the sequence is MLYLGLFSLLAALAFTAMVCA. Topologically, residues 410–534 are cytoplasmic; the sequence is MPQAWKHLEA…SSIYSNVFPA (125 aa).

This sequence belongs to the tweety family. As to quaternary structure, forms cis-homodimers in the presence of Ca(+2) and forms monomers and trans-dimers in the absence of Ca(2+).

The protein resides in the cell membrane. It carries out the reaction chloride(in) = chloride(out). The catalysed reaction is L-glutamate(out) = L-glutamate(in). Functionally, may act as a calcium-independent, swelling-dependent volume-regulated anion channel (VRAC-swell) which plays a pivotal role in the process of regulatory volume decrease (RVD) in the brain through the efflux of anions like chloride and organic osmolytes like glutamate. Probable large-conductance Ca(2+)-activated chloride channel. The protein is Protein tweety homolog 2 (ttyh2) of Xenopus tropicalis (Western clawed frog).